The sequence spans 128 residues: MLIGVGTDIVQIPRIEKILNLYQELFAKKILTSQELKQFTLLDKPNHATFLAKRFAAKEAVSKAFGVGIGQGINFKNITIINDNLGKPVVEVSSHYTNKLIPFHIHLSLSDDYPICIAFAIVESNCSV.

2 residues coordinate Mg(2+): aspartate 8 and glutamate 59.

Belongs to the P-Pant transferase superfamily. AcpS family. Mg(2+) is required as a cofactor.

It localises to the cytoplasm. The catalysed reaction is apo-[ACP] + CoA = holo-[ACP] + adenosine 3',5'-bisphosphate + H(+). In terms of biological role, transfers the 4'-phosphopantetheine moiety from coenzyme A to a Ser of acyl-carrier-protein. The polypeptide is Holo-[acyl-carrier-protein] synthase (Rickettsia typhi (strain ATCC VR-144 / Wilmington)).